Reading from the N-terminus, the 147-residue chain is Acireductone dioxygenase (147 aa).

Residues His74, His76, Glu80, and His119 each coordinate Fe(2+). Positions 74, 76, 80, and 119 each coordinate Ni(2+).

This sequence belongs to the acireductone dioxygenase (ARD) family. The cofactor is Fe(2+). Requires Ni(2+) as cofactor.

The protein localises to the cytoplasm. The protein resides in the nucleus. It carries out the reaction 1,2-dihydroxy-5-(methylsulfanyl)pent-1-en-3-one + O2 = 4-methylsulfanyl-2-oxobutanoate + formate + 2 H(+). It catalyses the reaction 1,2-dihydroxy-5-(methylsulfanyl)pent-1-en-3-one + O2 = 3-(methylsulfanyl)propanoate + CO + formate + 2 H(+). Its pathway is amino-acid biosynthesis; L-methionine biosynthesis via salvage pathway; L-methionine from S-methyl-5-thio-alpha-D-ribose 1-phosphate: step 5/6. Catalyzes 2 different reactions between oxygen and the acireductone 1,2-dihydroxy-3-keto-5-methylthiopentene (DHK-MTPene) depending upon the metal bound in the active site. Fe-containing acireductone dioxygenase (Fe-ARD) produces formate and 2-keto-4-methylthiobutyrate (KMTB), the alpha-ketoacid precursor of methionine in the methionine recycle pathway. Ni-containing acireductone dioxygenase (Ni-ARD) produces methylthiopropionate, carbon monoxide and formate, and does not lie on the methionine recycle pathway. The polypeptide is Acireductone dioxygenase (adi1) (Dictyostelium discoideum (Social amoeba)).